Here is a 306-residue protein sequence, read N- to C-terminus: UDP-3-O-acyl-N-acetylglucosamine deacetylase (306 aa).

Zn(2+) is bound by residues His79, His238, and Asp242. The Proton donor role is filled by His265.

Belongs to the LpxC family. Zn(2+) serves as cofactor.

It carries out the reaction a UDP-3-O-[(3R)-3-hydroxyacyl]-N-acetyl-alpha-D-glucosamine + H2O = a UDP-3-O-[(3R)-3-hydroxyacyl]-alpha-D-glucosamine + acetate. The protein operates within glycolipid biosynthesis; lipid IV(A) biosynthesis; lipid IV(A) from (3R)-3-hydroxytetradecanoyl-[acyl-carrier-protein] and UDP-N-acetyl-alpha-D-glucosamine: step 2/6. Its function is as follows. Catalyzes the hydrolysis of UDP-3-O-myristoyl-N-acetylglucosamine to form UDP-3-O-myristoylglucosamine and acetate, the committed step in lipid A biosynthesis. This is UDP-3-O-acyl-N-acetylglucosamine deacetylase from Shewanella oneidensis (strain ATCC 700550 / JCM 31522 / CIP 106686 / LMG 19005 / NCIMB 14063 / MR-1).